The chain runs to 199 residues: Pyridoxal 5'-phosphate synthase subunit PdxT (199 aa).

L-glutamine is bound at residue 51–53 (GES). Cys-83 functions as the Nucleophile in the catalytic mechanism. Residues Arg-110 and 137–138 (IR) each bind L-glutamine. Active-site charge relay system residues include His-172 and Glu-174.

It belongs to the glutaminase PdxT/SNO family. In the presence of PdxS, forms a dodecamer of heterodimers. Only shows activity in the heterodimer.

It catalyses the reaction aldehydo-D-ribose 5-phosphate + D-glyceraldehyde 3-phosphate + L-glutamine = pyridoxal 5'-phosphate + L-glutamate + phosphate + 3 H2O + H(+). The catalysed reaction is L-glutamine + H2O = L-glutamate + NH4(+). The protein operates within cofactor biosynthesis; pyridoxal 5'-phosphate biosynthesis. Its function is as follows. Catalyzes the hydrolysis of glutamine to glutamate and ammonia as part of the biosynthesis of pyridoxal 5'-phosphate. The resulting ammonia molecule is channeled to the active site of PdxS. The protein is Pyridoxal 5'-phosphate synthase subunit PdxT of Thermoplasma volcanium (strain ATCC 51530 / DSM 4299 / JCM 9571 / NBRC 15438 / GSS1).